The primary structure comprises 336 residues: 3-isopropylmalate dehydrogenase (336 aa).

Residues Arg87, Arg97, Arg121, and Asp211 each coordinate substrate. Asp211, Asp235, and Asp239 together coordinate Mg(2+). An NAD(+)-binding site is contributed by 271–283 (GSAPDIAGQGIAD).

Belongs to the isocitrate and isopropylmalate dehydrogenases family. LeuB type 2 subfamily. As to quaternary structure, homodimer. Mg(2+) serves as cofactor. Requires Mn(2+) as cofactor.

The protein resides in the cytoplasm. The catalysed reaction is (2R,3S)-3-isopropylmalate + NAD(+) = 4-methyl-2-oxopentanoate + CO2 + NADH. The protein operates within amino-acid biosynthesis; L-leucine biosynthesis; L-leucine from 3-methyl-2-oxobutanoate: step 3/4. Functionally, catalyzes the oxidation of 3-carboxy-2-hydroxy-4-methylpentanoate (3-isopropylmalate) to 3-carboxy-4-methyl-2-oxopentanoate. The product decarboxylates to 4-methyl-2 oxopentanoate. This is 3-isopropylmalate dehydrogenase from Mycolicibacterium paratuberculosis (strain ATCC BAA-968 / K-10) (Mycobacterium paratuberculosis).